A 504-amino-acid polypeptide reads, in one-letter code: Kinesin light chain 3 (504 aa).

Residues 90-150 (ALSAHVGALE…EEEKRHLEFL (61 aa)) adopt a coiled-coil conformation. A disordered region spans residues 153–197 (LRQYDPPAESQQSESPPRRDSLASLFPSEEEERKGPEAAGAAAAQ). Residues 158-167 (PPAESQQSES) are compositionally biased toward low complexity. Serine 173 is modified (phosphoserine). 5 TPR repeats span residues 207–240 (LRTL…LERS), 249–282 (ATML…REQT), 291–324 (AATL…REKV), 333–366 (AKQL…YEAL), and 375–408 (AKTK…EDLP). The disordered stretch occupies residues 411-438 (LGAPNTGTAGDAEQALRRSSSLSKIRES). Serine 466 is subject to Phosphoserine. Position 498 is a phosphothreonine (threonine 498). Residue serine 502 is modified to Phosphoserine.

It belongs to the kinesin light chain family. Oligomer composed of two heavy chains and two light chains. Associates with microtubulin in an ATP-dependent manner. Interacts with KIF5C. Interacts with ODF1. Interacts with LRGUK. Interacts with VDAC2.

It localises to the cytoplasm. The protein localises to the cytoskeleton. It is found in the mitochondrion. In terms of biological role, kinesin is a microtubule-associated force-producing protein that may play a role in organelle transport. Plays a role during spermiogenesis in the development of the sperm tail midpiece and in the normal function of spermatozoa. May play a role in the formation of the mitochondrial sheath formation in the developing spermatid midpiece. This is Kinesin light chain 3 (KLC3) from Pongo abelii (Sumatran orangutan).